The primary structure comprises 382 residues: Carbamoyl phosphate synthase small chain (382 aa).

Residues 1-189 (MIKSALLVLE…ELPAAKNESE (189 aa)) are CPSase. Ser-47, Gly-241, and Gly-243 together coordinate L-glutamine. In terms of domain architecture, Glutamine amidotransferase type-1 spans 193-380 (HVVAYDYGVK…IDLIQTYRSS (188 aa)). Residue Cys-269 is the Nucleophile of the active site. Residues Leu-270, Gln-273, Asn-311, Gly-313, and Phe-314 each coordinate L-glutamine. Catalysis depends on residues His-353 and Glu-355.

This sequence belongs to the CarA family. In terms of assembly, composed of two chains; the small (or glutamine) chain promotes the hydrolysis of glutamine to ammonia, which is used by the large (or ammonia) chain to synthesize carbamoyl phosphate. Tetramer of heterodimers (alpha,beta)4.

The enzyme catalyses hydrogencarbonate + L-glutamine + 2 ATP + H2O = carbamoyl phosphate + L-glutamate + 2 ADP + phosphate + 2 H(+). It catalyses the reaction L-glutamine + H2O = L-glutamate + NH4(+). Its pathway is amino-acid biosynthesis; L-arginine biosynthesis; carbamoyl phosphate from bicarbonate: step 1/1. It participates in pyrimidine metabolism; UMP biosynthesis via de novo pathway; (S)-dihydroorotate from bicarbonate: step 1/3. Functionally, small subunit of the glutamine-dependent carbamoyl phosphate synthetase (CPSase). CPSase catalyzes the formation of carbamoyl phosphate from the ammonia moiety of glutamine, carbonate, and phosphate donated by ATP, constituting the first step of 2 biosynthetic pathways, one leading to arginine and/or urea and the other to pyrimidine nucleotides. The small subunit (glutamine amidotransferase) binds and cleaves glutamine to supply the large subunit with the substrate ammonia. The protein is Carbamoyl phosphate synthase small chain of Pectobacterium atrosepticum (strain SCRI 1043 / ATCC BAA-672) (Erwinia carotovora subsp. atroseptica).